Consider the following 530-residue polypeptide: UDP-glucuronosyltransferase 2B14 (530 aa).

The N-terminal stretch at 1–24 (MSVKHVSVLLLLLQLSCCFRTGSC) is a signal peptide. Residues Asn134 and Asn316 are each glycosylated (N-linked (GlcNAc...) asparagine). Residues 494 to 510 (VVGFLVSCAAFLIFLVI) form a helical membrane-spanning segment.

The protein belongs to the UDP-glycosyltransferase family.

The protein resides in the microsome membrane. It is found in the endoplasmic reticulum membrane. It carries out the reaction glucuronate acceptor + UDP-alpha-D-glucuronate = acceptor beta-D-glucuronoside + UDP + H(+). Its function is as follows. UDPGT is of major importance in the conjugation and subsequent elimination of potentially toxic xenobiotics and endogenous compounds. The protein is UDP-glucuronosyltransferase 2B14 (UGT2B14) of Oryctolagus cuniculus (Rabbit).